The chain runs to 463 residues: Fumarate hydratase class II (463 aa).

Substrate is bound by residues 98–100 (SGT), 129–132 (HPND), 139–141 (SSN), and Thr-187. His-188 (proton donor/acceptor) is an active-site residue. The active site involves Ser-318. Substrate is bound by residues Ser-319 and 324–326 (KVN).

Belongs to the class-II fumarase/aspartase family. Fumarase subfamily. Homotetramer.

It is found in the cytoplasm. It carries out the reaction (S)-malate = fumarate + H2O. It participates in carbohydrate metabolism; tricarboxylic acid cycle; (S)-malate from fumarate: step 1/1. Its function is as follows. Involved in the TCA cycle. Catalyzes the stereospecific interconversion of fumarate to L-malate. In Rickettsia bellii (strain RML369-C), this protein is Fumarate hydratase class II.